The primary structure comprises 179 residues: Large ribosomal subunit protein uL5 (179 aa).

It belongs to the universal ribosomal protein uL5 family. Part of the 50S ribosomal subunit; part of the 5S rRNA/L5/L18/L25 subcomplex. Contacts the 5S rRNA and the P site tRNA. Forms a bridge to the 30S subunit in the 70S ribosome.

In terms of biological role, this is one of the proteins that bind and probably mediate the attachment of the 5S RNA into the large ribosomal subunit, where it forms part of the central protuberance. In the 70S ribosome it contacts protein S13 of the 30S subunit (bridge B1b), connecting the 2 subunits; this bridge is implicated in subunit movement. Contacts the P site tRNA; the 5S rRNA and some of its associated proteins might help stabilize positioning of ribosome-bound tRNAs. This chain is Large ribosomal subunit protein uL5, found in Francisella tularensis subsp. tularensis (strain SCHU S4 / Schu 4).